A 291-amino-acid polypeptide reads, in one-letter code: uncharacterized protein (291 aa).

10 helical membrane-spanning segments follow: residues Met1–Ala21, Ile26–Leu46, Pro67–Val87, Ser95–His115, Thr117–Leu137, Phe149–Phe169, Phe179–Phe199, Ser208–Ile228, Val241–Phe261, and Trp270–Ile290. The EamA domain maps to Ile107 to Thr138.

It localises to the cell membrane. This is an uncharacterized protein from Haemophilus influenzae (strain ATCC 51907 / DSM 11121 / KW20 / Rd).